Here is a 65-residue protein sequence, read N- to C-terminus: Small ribosomal subunit protein bS21 (65 aa).

Over residues 46-57 the composition is skewed to basic residues; the sequence is RLKRSRSKRRAQ. Positions 46–65 are disordered; the sequence is RLKRSRSKRRAQRANEERNS.

Belongs to the bacterial ribosomal protein bS21 family.

The chain is Small ribosomal subunit protein bS21 from Chlorobaculum tepidum (strain ATCC 49652 / DSM 12025 / NBRC 103806 / TLS) (Chlorobium tepidum).